A 247-amino-acid chain; its full sequence is Probable dihydroorotate dehydrogenase B (NAD(+)), electron transfer subunit (247 aa).

The 87-residue stretch at 1–87 folds into the FAD-binding FR-type domain; the sequence is MLRRVSIEET…RGPYGHGFSG (87 aa). C201, C206, C209, and C217 together coordinate [2Fe-2S] cluster.

The protein belongs to the PyrK family. In terms of assembly, heterotetramer of 2 PyrK and 2 PyrD type B subunits. The cofactor is [2Fe-2S] cluster. Requires FAD as cofactor.

It functions in the pathway pyrimidine metabolism; UMP biosynthesis via de novo pathway; orotate from (S)-dihydroorotate (NAD(+) route): step 1/1. In terms of biological role, responsible for channeling the electrons from the oxidation of dihydroorotate from the FMN redox center in the PyrD type B subunit to the ultimate electron acceptor NAD(+). The chain is Probable dihydroorotate dehydrogenase B (NAD(+)), electron transfer subunit from Pyrococcus furiosus (strain ATCC 43587 / DSM 3638 / JCM 8422 / Vc1).